The following is a 397-amino-acid chain: Phosphoglycerate kinase (397 aa).

Substrate is bound by residues 21–23 (DFN), R37, 60–63 (HLGR), R119, and R152. Residues K203, G294, E325, and 354 to 357 (GGDS) each bind ATP.

The protein belongs to the phosphoglycerate kinase family. Monomer.

It is found in the cytoplasm. It carries out the reaction (2R)-3-phosphoglycerate + ATP = (2R)-3-phospho-glyceroyl phosphate + ADP. It participates in carbohydrate degradation; glycolysis; pyruvate from D-glyceraldehyde 3-phosphate: step 2/5. The chain is Phosphoglycerate kinase from Pelodictyon phaeoclathratiforme (strain DSM 5477 / BU-1).